The primary structure comprises 357 residues: MEVVEVLHMNGGNGDSSYANNSLVQQKVILMTKPITEQAMIDLYSSLFPETLCIADLGCSLGANTFLVVSQIVKIVEKERKKHGFKSPEFYFHFNDLPGNDFNTLFQSLGAFQEDLRKHIGESFGPCFFSGVPGSFYTRLFPSKSLHFVYSSYSLMWLSQVPNGIENNKGNIYMARTSPLSVIKAYYKQYEIDFSNFLKYRSEELMKGGKMVLTLLGRESEDPTSKECCYIWELLAMALNELVKEGLIKEEKVDAFNIPQYTPSPAEVKYLVEKEGSFTINRLETSRVHWNASNNVKNGGYNVSRCMRAVAEPLLVSHFDKELMDLVFHKYEEIISDCMSKEKTEFINVIVSLTKIN.

S-adenosyl-L-homocysteine is bound at residue Tyr18. Position 25 (Gln25) interacts with benzoate. Positions 59, 64, 96, 97, 135, and 136 each coordinate S-adenosyl-L-homocysteine. Trp157 is a binding site for benzoate. The Mg(2+) site is built by Asn168, Asp254, Phe256, and Asn257. Gln260 provides a ligand contact to benzoate.

This sequence belongs to the methyltransferase superfamily. Type-7 methyltransferase family.

It carries out the reaction benzoate + S-adenosyl-L-methionine = methyl benzoate + S-adenosyl-L-homocysteine. The protein operates within aromatic compound metabolism. In terms of biological role, converts benzoic acid into the volatile ester methyl benzoates. This scent, mostly produced in a rhythmical, diurnal manner, attracts the pollinators. This Petunia hybrida (Petunia) protein is S-adenosyl-L-methionine:benzoic acid/salicylic acid carboxyl methyltransferase 3.